Reading from the N-terminus, the 430-residue chain is Enolase (430 aa).

Q164 serves as a coordination point for (2R)-2-phosphoglycerate. Catalysis depends on E208, which acts as the Proton donor. Mg(2+) is bound by residues D245, E288, and D315. Residues K340, R369, S370, and K391 each coordinate (2R)-2-phosphoglycerate. The Proton acceptor role is filled by K340.

This sequence belongs to the enolase family. Requires Mg(2+) as cofactor.

It localises to the cytoplasm. It is found in the secreted. Its subcellular location is the cell surface. The catalysed reaction is (2R)-2-phosphoglycerate = phosphoenolpyruvate + H2O. It participates in carbohydrate degradation; glycolysis; pyruvate from D-glyceraldehyde 3-phosphate: step 4/5. In terms of biological role, catalyzes the reversible conversion of 2-phosphoglycerate (2-PG) into phosphoenolpyruvate (PEP). It is essential for the degradation of carbohydrates via glycolysis. The polypeptide is Enolase (Pyrococcus furiosus (strain ATCC 43587 / DSM 3638 / JCM 8422 / Vc1)).